The primary structure comprises 733 residues: Two pore calcium channel protein 1 (733 aa).

M1 carries the N-acetylmethionine modification. Topologically, residues 1–71 (MEDPLIGRDS…RYYFIFTRLD (71 aa)) are cytoplasmic. Residues 72–92 (LIWSLNYFALLFLNFFEQPLW) traverse the membrane as a helical segment. Over 93–120 (CEKNPKPSCKDRDYYYLGELPYLTNAES) the chain is Vacuolar. Residues 121–141 (IIYEVITLAILLVHTFFPISY) traverse the membrane as a helical segment. Residues 142–158 (EGSRIFWTSRLNLVKVA) lie on the Cytoplasmic side of the membrane. Residues 159–179 (CVVILFVDVLVDFLYLSPLAF) traverse the membrane as a helical segment. D180 is a topological domain (vacuolar). A helical; Voltage-sensor transmembrane segment spans residues 181–199 (FLPFRIAPYVRVIIFILSI). Topologically, residues 200-218 (RELRDTLVLLSGMLGTYLN) are cytoplasmic. The chain crosses the membrane as a helical span at residues 219 to 239 (ILALWMLFLLFASWIAFVMFE). Residues 240-245 (DTQQGL) lie on the Vacuolar side of the membrane. An intramembrane region (pore-forming) is located at residues 246–260 (TVFTSYGATLYQMFI). Topologically, residues 261-282 (LFTTSNNPDVWIPAYKSSRWSS) are vacuolar. Residues 283–303 (VFFVLYVLIGVYFVTNLILAV) form a helical membrane-spanning segment. At 304-428 (VYDSFKEQLA…LSQQLRAFVR (125 aa)) the chain is on the cytoplasmic side. EF-hand domains follow at residues 322–357 (MKRR…LTNY) and 363–398 (ISKE…IALR). The chain crosses the membrane as a helical span at residues 429 to 449 (SPNFGYAISFILIINFIAVVV). Topologically, residues 450–465 (ETTLDIEESSAQKPWQ) are vacuolar. A helical transmembrane segment spans residues 466–486 (VAEFVFGWIYVLEMALKIYTY). Topologically, residues 487 to 498 (GFENYWREGANR) are cytoplasmic. A helical transmembrane segment spans residues 499–519 (FDFLVTWVIVIGETATFITPD). Over 520–528 (ENTFFSNGE) the chain is Vacuolar. Residues 529–546 (WIRYLLLARMLRLIRLLM) form a helical; Voltage-sensor membrane-spanning segment. Residues 547-557 (NVQRYRAFIAT) lie on the Cytoplasmic side of the membrane. A helical transmembrane segment spans residues 558-578 (FITLIPSLMPYLGTIFCVLCI). Over 579–615 (YCSIGVQVFGGLVNAGNKKLFETELAEDDYLLFNFND) the chain is Vacuolar. Residues 616–630 (YPNGMVTLFNLLVMG) constitute an intramembrane region (pore-forming). Topologically, residues 631-651 (NWQVWMESYKDLTGTWWSITY) are vacuolar. The chain crosses the membrane as a helical span at residues 652-672 (FVSFYVITILLLLNLVVAFVL). Topologically, residues 673–733 (EAFFTELDLE…SKPECSTSDT (61 aa)) are cytoplasmic. Over residues 686–695 (KCQGQDSQEK) the composition is skewed to basic and acidic residues. A disordered region spans residues 686-711 (KCQGQDSQEKRNRRRSAGSKSRSQRV).

The protein belongs to the calcium channel alpha-1 subunit (TC 1.A.1.11) family. Two pore calcium channel subfamily. In terms of assembly, homodimer. Ubiquitously expressed.

It localises to the vacuole membrane. Inhibited by Al(3+). Functions as a voltage-gated inward-rectifying Ca(2+) channel (VDCC) across the vacuole membrane. Is one of the essential components of the slow vacuolar (SV) channel. Acts as the major ROS-responsive Ca(2+) channel and is the possible target of Al-dependent inhibition. Involved in the regulation of germination and stomatal movement. This is Two pore calcium channel protein 1 (TPC1) from Arabidopsis thaliana (Mouse-ear cress).